Consider the following 313-residue polypeptide: Isoaspartyl peptidase (313 aa).

The active-site Nucleophile is Thr179. Substrate is bound by residues 207–210 (RVGD) and 230–233 (TGTG).

This sequence belongs to the Ntn-hydrolase family. Heterotetramer of two alpha and two beta chains arranged as a dimer of alpha/beta heterodimers. In terms of processing, autocleaved. Generates the alpha and beta subunits. The beta subunit is thought to be responsible for the nucleophile hydrolase activity.

The enzyme catalyses Cleavage of a beta-linked Asp residue from the N-terminus of a polypeptide.. Its function is as follows. Degrades proteins damaged by L-isoaspartyl residue formation (also known as beta-Asp residues). Degrades L-isoaspartyl-containing di- and tripeptides. Acts best on iso-Asp-Leu, followed by iso-Asp-Ala, -His and to a lesser extent iso-Asp-Lys, -Phe and iso-Asp-Leu-Ala. Does not act on internal iso-Asp bonds (Als-iso-Asp-Leu-Ala). Does not act on alpha-Asp bonds. Has poor L-asparaginase activity. This is Isoaspartyl peptidase (iaaA) from Salmonella typhimurium (strain LT2 / SGSC1412 / ATCC 700720).